Here is a 200-residue protein sequence, read N- to C-terminus: 3-isopropylmalate dehydratase small subunit (200 aa).

The protein belongs to the LeuD family. LeuD type 1 subfamily. In terms of assembly, heterodimer of LeuC and LeuD.

It catalyses the reaction (2R,3S)-3-isopropylmalate = (2S)-2-isopropylmalate. It functions in the pathway amino-acid biosynthesis; L-leucine biosynthesis; L-leucine from 3-methyl-2-oxobutanoate: step 2/4. In terms of biological role, catalyzes the isomerization between 2-isopropylmalate and 3-isopropylmalate, via the formation of 2-isopropylmaleate. In Actinobacillus pleuropneumoniae serotype 5b (strain L20), this protein is 3-isopropylmalate dehydratase small subunit.